We begin with the raw amino-acid sequence, 634 residues long: CREB-regulated transcription coactivator 1 (634 aa).

Residues Ser64 and Ser113 each carry the phosphoserine modification. Disordered stretches follow at residues 110–174, 191–221, 258–331, and 357–479; these read RLGS…GSQD, TTSE…VPGI, LPTP…TLSP, and QAGS…HTST. Thr149 carries the post-translational modification Phosphothreonine. Residue Ser151 is modified to Phosphoserine; by SIK1 and SIK2. The segment covering 151-174 has biased composition (polar residues); sequence SDSALHQSTMTPTQPESFSSGSQD. Thr161 is modified (phosphothreonine). Positions 194-208 are enriched in basic and acidic residues; it reads EADKNLSKQAWDTKK. Residues 242–258 carry the Nuclear export signal motif; it reads TGGSLPDLTNIHFPSPL. 3 stretches are compositionally biased toward polar residues: residues 271-283, 296-305, and 314-331; these read ALSS…NLAA, GMSTPGSSPQ, and LSLS…TLSP. Positions 362 to 397 are enriched in pro residues; it reads QPPPQPQPPPPPPPASQQPPPPPPPQAPVRLPPGGP. Residues 446-479 are compositionally biased toward polar residues; that stretch reads QYRTSAGSPANQSPTSPVSNQGFSPGSSPQHTST.

The protein belongs to the TORC family. Binds, as a tetramer, through its N-terminal region, with the bZIP domain of CREB1. 'Arg-314' in the bZIP domain of CREB1 is essential for this interaction. Interaction, via its C-terminal, with TAF4, enhances recruitment of TAF4 to CREB1. Interacts with 14-3-3 proteins, including YWHAE/14-3-3 epsilon. Interacts with calmodulin-dependent catalytic subunit PPP3CA/calcineurin A. As to quaternary structure, (Microbial infection) Interacts with HTLV1 Tax. Post-translationally, phosphorylation/dephosphorylation states of Ser-151 are required for regulating transduction of CREB activity. TORCs are inactive when phosphorylated, and active when dephosphorylated at this site. This primary site of phosphorylation is mediated by SIKs (SIK1 and SIK2), is regulated by cAMP and calcium levels and is dependent on the phosphorylation of SIKs by LKB1. In terms of tissue distribution, highly expressed in adult and fetal brain. Located to specific regions such as the prefrontal cortex and cerebellum. Very low expression in other tissues such as heart, spleen, lung, skeletal muscle, salivary gland, ovary and kidney.

It localises to the cytoplasm. The protein resides in the nucleus. Its function is as follows. Transcriptional coactivator for CREB1 which activates transcription through both consensus and variant cAMP response element (CRE) sites. Acts as a coactivator, in the SIK/TORC signaling pathway, being active when dephosphorylated and acts independently of CREB1 'Ser-133' phosphorylation. Enhances the interaction of CREB1 with TAF4. Regulates the expression of specific CREB-activated genes such as the steroidogenic gene, StAR. Potent coactivator of PGC1alpha and inducer of mitochondrial biogenesis in muscle cells. In the hippocampus, involved in late-phase long-term potentiation (L-LTP) maintenance at the Schaffer collateral-CA1 synapses. May be required for dendritic growth of developing cortical neurons. In concert with SIK1, regulates the light-induced entrainment of the circadian clock. In response to light stimulus, coactivates the CREB-mediated transcription of PER1 which plays an important role in the photic entrainment of the circadian clock. (Microbial infection) Plays a role of coactivator for TAX activation of the human T-cell leukemia virus type 1 (HTLV-1) long terminal repeats (LTR). This Homo sapiens (Human) protein is CREB-regulated transcription coactivator 1.